We begin with the raw amino-acid sequence, 60 residues long: Pepsin-3 (60 aa).

The propeptide at 1 to 35 (INVPLTRHKSMRESLREKGIELPYQDPAIKYRPEF) is activation peptide.

It belongs to the peptidase A1 family.

This Thunnus orientalis (North Pacific bluefin tuna) protein is Pepsin-3.